The following is a 616-amino-acid chain: Dihydroxy-acid dehydratase (616 aa).

Asp81 is a binding site for Mg(2+). A [2Fe-2S] cluster-binding site is contributed by Cys122. Residues Asp123 and Lys124 each contribute to the Mg(2+) site. An N6-carboxylysine modification is found at Lys124. Cys195 is a [2Fe-2S] cluster binding site. Glu491 serves as a coordination point for Mg(2+). Ser517 serves as the catalytic Proton acceptor.

It belongs to the IlvD/Edd family. As to quaternary structure, homodimer. The cofactor is [2Fe-2S] cluster. It depends on Mg(2+) as a cofactor.

The catalysed reaction is (2R)-2,3-dihydroxy-3-methylbutanoate = 3-methyl-2-oxobutanoate + H2O. It catalyses the reaction (2R,3R)-2,3-dihydroxy-3-methylpentanoate = (S)-3-methyl-2-oxopentanoate + H2O. It participates in amino-acid biosynthesis; L-isoleucine biosynthesis; L-isoleucine from 2-oxobutanoate: step 3/4. Its pathway is amino-acid biosynthesis; L-valine biosynthesis; L-valine from pyruvate: step 3/4. Functionally, functions in the biosynthesis of branched-chain amino acids. Catalyzes the dehydration of (2R,3R)-2,3-dihydroxy-3-methylpentanoate (2,3-dihydroxy-3-methylvalerate) into 2-oxo-3-methylpentanoate (2-oxo-3-methylvalerate) and of (2R)-2,3-dihydroxy-3-methylbutanoate (2,3-dihydroxyisovalerate) into 2-oxo-3-methylbutanoate (2-oxoisovalerate), the penultimate precursor to L-isoleucine and L-valine, respectively. This Photorhabdus laumondii subsp. laumondii (strain DSM 15139 / CIP 105565 / TT01) (Photorhabdus luminescens subsp. laumondii) protein is Dihydroxy-acid dehydratase.